A 363-amino-acid polypeptide reads, in one-letter code: Ribosome-binding ATPase YchF (363 aa).

The 254-residue stretch at 3–256 (FKCGIVGLPN…LDDEERDEFM (254 aa)) folds into the OBG-type G domain. 12 to 17 (NVGKST) contributes to the ATP binding site. Mg(2+) contacts are provided by S16 and T36. The 84-residue stretch at 278–361 (NLQTYFTAGV…KDGDVMNFLF (84 aa)) folds into the TGS domain.

It belongs to the TRAFAC class OBG-HflX-like GTPase superfamily. OBG GTPase family. YchF/OLA1 subfamily. Requires Mg(2+) as cofactor.

Its function is as follows. ATPase that binds to both the 70S ribosome and the 50S ribosomal subunit in a nucleotide-independent manner. The sequence is that of Ribosome-binding ATPase YchF from Escherichia coli O157:H7.